A 420-amino-acid polypeptide reads, in one-letter code: Reticulon-4 receptor-like 2 (420 aa).

Residues 1-30 form the signal peptide; sequence MLPGLRRLLQGPASACLLLTLLALPPVTPS. 2 cysteine pairs are disulfide-bonded: C31-C37 and C35-C46. Residues 31–60 enclose the LRRNT domain; the sequence is CPMLCTCYSSPPTVSCQANNFSSVPLSLPP. N50 carries N-linked (GlcNAc...) asparagine glycosylation. LRR repeat units lie at residues 61–82, 83–104, 107–129, 132–153, 156–177, 180–201, 204–225, and 228–249; these read STQR…TFGP, NLLT…TFRH, ALEE…TFQG, RLQS…IFRG, SLQY…LFAD, NLSH…VFRG, SLDR…AFHG, and RLTI…ALAD. An N-linked (GlcNAc...) asparagine glycan is attached at N93. N236 is a glycosylation site (N-linked (GlcNAc...) asparagine). Residues 261–312 enclose the LRRCT domain; the sequence is NPWACDCRARPLWAWFQRARVSSSDVTCATPPERQGRDLRTLRDTDFQACPP. 2 disulfide bridges follow: C265/C288 and C267/C310. Residues 286 to 390 are disordered; it reads VTCATPPERQ…GEQTCPGAAC (105 aa). The span at 294–306 shows a compositional bias: basic and acidic residues; that stretch reads RQGRDLRTLRDTD. Residues 315 to 327 form an important for interaction with MAG region; the sequence is PTRPGSRARGNSS. Positions 351 to 360 are enriched in basic and acidic residues; the sequence is LPAEDSRGRQ. Residue C390 is the site of GPI-anchor amidated cysteine attachment. Residues 391-420 constitute a propeptide, removed in mature form; that stretch reads QAPADSRGPVLSAGLRTPLLCLLLLAPHHL.

It belongs to the Nogo receptor family. Interaction with MAG is controversial, and may be indirect. Interacts with MAG. Does not interact with OMG and RTN4. In terms of processing, undergoes zinc metalloproteinase-mediated ectodomain shedding in neuroblastoma cells; is released both as a full-length ectodomain and an N-terminal fragment containing the leucine-rich repeat (LRR) region of the protein. N-glycosylated. O-glycosylated. Contains terminal sialic acid groups on its glycan chains. As to expression, detected in adult brain, in neocortex, hippocampus, striatum and dorsal root ganglion neurons, and in retina (at protein level). In brain, detected in cerebral cortex and hippocampus. Weak or no expression detected in the cerebellum, thalamus or striatum.

Its subcellular location is the cell membrane. It is found in the cell projection. The protein resides in the dendrite. The protein localises to the perikaryon. It localises to the axon. Its subcellular location is the membrane raft. In terms of biological role, cell surface receptor that plays a functionally redundant role in the inhibition of neurite outgrowth mediated by MAG. Plays a functionally redundant role in postnatal brain development. Contributes to normal axon migration across the brain midline and normal formation of the corpus callosum. Does not seem to play a significant role in regulating axon regeneration in the adult central nervous system. Protects motoneurons against apoptosis; protection against apoptosis is probably mediated by MAG. Like other family members, plays a role in restricting the number dendritic spines and the number of synapses that are formed during brain development. Signaling mediates activation of Rho and downstream reorganization of the actin cytoskeleton. The protein is Reticulon-4 receptor-like 2 of Rattus norvegicus (Rat).